An 818-amino-acid chain; its full sequence is Catenin beta (818 aa).

Polar residues-rich tracts occupy residues 1-21 (METY…TPQG) and 48-66 (GDSG…SVSS). Disordered stretches follow at residues 1 to 24 (METY…GQYM) and 48 to 71 (GDSG…HGLD). ARM repeat units follow at residues 164–203 (NYQD…QLSK), 248–287 (RQGL…NLLL), 412–451 (DAAT…NLTC), 454–495 (QRNK…HLTS), 501–541 (EMAQ…NLAL), 543–582 (PANH…NTSA), and 648–687 (KEGA…RMSE). The disordered stretch occupies residues 732–818 (QGFRGYQGSG…QMAAWFDTDL (87 aa)).

The protein belongs to the beta-catenin family.

It localises to the cytoplasm. Its subcellular location is the cytoskeleton. In terms of biological role, binds to the cytoplasmic domain of the cell-cell adhesion molecule E-cadherin, and perhaps to other (membrane) proteins. The association of catenins to cadherins produces a complex which is linked to the actin filament network, and which seems to be of primary importance for cadherins cell-adhesion properties. In Urechis caupo (Innkeeper worm), this protein is Catenin beta.